Here is a 212-residue protein sequence, read N- to C-terminus: Uracil-DNA glycosylase (212 aa).

The active-site Proton acceptor is the Asp-59.

This sequence belongs to the uracil-DNA glycosylase (UDG) superfamily. UNG family.

The protein resides in the cytoplasm. The catalysed reaction is Hydrolyzes single-stranded DNA or mismatched double-stranded DNA and polynucleotides, releasing free uracil.. Excises uracil residues from the DNA which can arise as a result of misincorporation of dUMP residues by DNA polymerase or due to deamination of cytosine. The polypeptide is Uracil-DNA glycosylase (Ureaplasma urealyticum serovar 10 (strain ATCC 33699 / Western)).